A 91-amino-acid chain; its full sequence is Late embryogenis abundant protein 2 (91 aa).

Residues 47–72 form a disordered region; it reads KRAGEASSEKAPWVPDPKTGYYRPET.

The protein belongs to the LEA type 3 family.

The protein resides in the cytoplasm. The protein localises to the nucleus. The polypeptide is Late embryogenis abundant protein 2 (Arabidopsis thaliana (Mouse-ear cress)).